Consider the following 82-residue polypeptide: MADTSSSQARRPFHRRRKTCPFSGANAPKIDYKDVRLLQRYISERGKIVPSRITAVSQKKQRELAQAIKRARFLGLLPYVVA.

Positions 1 to 25 are disordered; that stretch reads MADTSSSQARRPFHRRRKTCPFSGA.

Belongs to the bacterial ribosomal protein bS18 family. In terms of assembly, part of the 30S ribosomal subunit. Forms a tight heterodimer with protein bS6.

Its function is as follows. Binds as a heterodimer with protein bS6 to the central domain of the 16S rRNA, where it helps stabilize the platform of the 30S subunit. This chain is Small ribosomal subunit protein bS18, found in Agrobacterium fabrum (strain C58 / ATCC 33970) (Agrobacterium tumefaciens (strain C58)).